Reading from the N-terminus, the 206-residue chain is Imidazoleglycerol-phosphate dehydratase (206 aa).

The protein belongs to the imidazoleglycerol-phosphate dehydratase family.

It localises to the cytoplasm. It carries out the reaction D-erythro-1-(imidazol-4-yl)glycerol 3-phosphate = 3-(imidazol-4-yl)-2-oxopropyl phosphate + H2O. It functions in the pathway amino-acid biosynthesis; L-histidine biosynthesis; L-histidine from 5-phospho-alpha-D-ribose 1-diphosphate: step 6/9. The protein is Imidazoleglycerol-phosphate dehydratase of Leptospira borgpetersenii serovar Hardjo-bovis (strain JB197).